Here is a 355-residue protein sequence, read N- to C-terminus: Meiotic coiled-coil protein 4 (355 aa).

A coiled-coil region spans residues 298–338 (QRLSRTEINKEIIEIEKLELEVVQFQMSIANLINTQVEVTN).

It is found in the cytoplasm. In terms of biological role, has a role in meiosis. This chain is Meiotic coiled-coil protein 4 (mcp4), found in Schizosaccharomyces pombe (strain 972 / ATCC 24843) (Fission yeast).